A 280-amino-acid polypeptide reads, in one-letter code: 4-diphosphocytidyl-2-C-methyl-D-erythritol kinase (280 aa).

K8 is a catalytic residue. An ATP-binding site is contributed by 91–101; the sequence is PVAAGLAGGST. The active site involves D133.

This sequence belongs to the GHMP kinase family. IspE subfamily.

It catalyses the reaction 4-CDP-2-C-methyl-D-erythritol + ATP = 4-CDP-2-C-methyl-D-erythritol 2-phosphate + ADP + H(+). Its pathway is isoprenoid biosynthesis; isopentenyl diphosphate biosynthesis via DXP pathway; isopentenyl diphosphate from 1-deoxy-D-xylulose 5-phosphate: step 3/6. Catalyzes the phosphorylation of the position 2 hydroxy group of 4-diphosphocytidyl-2C-methyl-D-erythritol. The protein is 4-diphosphocytidyl-2-C-methyl-D-erythritol kinase of Clostridium botulinum (strain ATCC 19397 / Type A).